Reading from the N-terminus, the 252-residue chain is Transmembrane ascorbate-dependent reductase CYB561 (252 aa).

Position 1 is an N-acetylmethionine (M1). Residues 1–17 (MEGPASPAPAPGALPYY) are Cytoplasmic-facing. Residues 18–38 (VAFSQLLGLTVVAMTGAWLGM) form a helical membrane-spanning segment. The Cytochrome b561 domain occupies 20 to 221 (FSQLLGLTVV…FATVVLYILT (202 aa)). Over 39 to 52 (YRGGIAWESALQFN) the chain is Vesicular. A helical membrane pass occupies residues 53–73 (VHPLCMVIGLVFLQGDALLVY). Heme b-binding residues include H54, R74, and K81. The Cytoplasmic portion of the chain corresponds to 74–86 (RVFRNEAKRTTKV). The L-ascorbate site is built by K81 and K85. Residues 87-107 (LHGLLHVFAFVIALVGLVAVF) form a helical membrane-spanning segment. Residues H88, 117-120 (DLYS), and H122 contribute to the heme b site. At 108–125 (EHHRKKGYADLYSLHSWC) the chain is on the vesicular side. A helical membrane pass occupies residues 126 to 146 (GILVFALFFAQWLVGFSFFLF). At 147-159 (PGASFSLRSRYRP) the chain is on the cytoplasmic side. R154 serves as a coordination point for L-ascorbate. Residues 160–180 (QHVFFGAAIFLLSVATALLGL) traverse the membrane as a helical segment. Positions 161 and 182 each coordinate heme b. The Vesicular portion of the chain corresponds to 181–199 (KEALLFELGTKYSTFEPEG). The chain crosses the membrane as a helical span at residues 200-220 (VLANVLGLLLAAFATVVLYIL). Residues 221-252 (TRADWKRPLQAEEQALSMDFKTLTEGDSPSSQ) are Cytoplasmic-facing. Residue K226 participates in heme b binding. A phosphoserine mark is found at S248 and S250.

Requires heme b as cofactor.

The protein localises to the cytoplasmic vesicle. It is found in the secretory vesicle. It localises to the chromaffin granule membrane. It carries out the reaction monodehydro-L-ascorbate radical(out) + L-ascorbate(in) = monodehydro-L-ascorbate radical(in) + L-ascorbate(out). Its function is as follows. Transmembrane reductase that uses ascorbate as an electron donor in the cytoplasm and transfers electrons across membranes to reduce monodehydro-L-ascorbate radical in the lumen of secretory vesicles. It is therefore involved the regeneration and homeostasis within secretory vesicles of ascorbate which in turn provides reducing equivalents needed to support the activity of intravesicular enzymes. This is Transmembrane ascorbate-dependent reductase CYB561 (CYB561) from Ovis aries (Sheep).